Reading from the N-terminus, the 652-residue chain is DNA ligase (652 aa).

NAD(+) contacts are provided by residues 29-33 (DSEYD), 78-79 (SL), and Glu107. Lys109 (N6-AMP-lysine intermediate) is an active-site residue. Positions 130, 164, 278, and 302 each coordinate NAD(+). Positions 395, 398, 413, and 418 each coordinate Zn(2+). One can recognise a BRCT domain in the interval 577-652 (VADAALSGLT…VRDEAWLESL (76 aa)).

This sequence belongs to the NAD-dependent DNA ligase family. LigA subfamily. The cofactor is Mg(2+). It depends on Mn(2+) as a cofactor.

It catalyses the reaction NAD(+) + (deoxyribonucleotide)n-3'-hydroxyl + 5'-phospho-(deoxyribonucleotide)m = (deoxyribonucleotide)n+m + AMP + beta-nicotinamide D-nucleotide.. Functionally, DNA ligase that catalyzes the formation of phosphodiester linkages between 5'-phosphoryl and 3'-hydroxyl groups in double-stranded DNA using NAD as a coenzyme and as the energy source for the reaction. It is essential for DNA replication and repair of damaged DNA. The protein is DNA ligase of Streptococcus pneumoniae serotype 4 (strain ATCC BAA-334 / TIGR4).